The chain runs to 331 residues: Thiamine-monophosphate kinase (331 aa).

Residues Asp43, Thr59, Thr60, and Asp61 each coordinate Mg(2+). His68 serves as a coordination point for substrate. 3 residues coordinate Mg(2+): Asp90, Asp138, and Asp231. Position 137–138 (137–138 (GD)) interacts with ATP. Ser233 is a binding site for ATP. Asp234 contacts Mg(2+). The substrate site is built by Glu284 and Trp328.

Belongs to the thiamine-monophosphate kinase family.

The catalysed reaction is thiamine phosphate + ATP = thiamine diphosphate + ADP. It functions in the pathway cofactor biosynthesis; thiamine diphosphate biosynthesis; thiamine diphosphate from thiamine phosphate: step 1/1. Functionally, catalyzes the ATP-dependent phosphorylation of thiamine-monophosphate (TMP) to form thiamine-pyrophosphate (TPP), the active form of vitamin B1. This is Thiamine-monophosphate kinase from Corynebacterium glutamicum (strain ATCC 13032 / DSM 20300 / JCM 1318 / BCRC 11384 / CCUG 27702 / LMG 3730 / NBRC 12168 / NCIMB 10025 / NRRL B-2784 / 534).